Consider the following 292-residue polypeptide: Ribosomal protein L11 methyltransferase (292 aa).

T145, G166, D188, and N229 together coordinate S-adenosyl-L-methionine.

It belongs to the methyltransferase superfamily. PrmA family.

It localises to the cytoplasm. It carries out the reaction L-lysyl-[protein] + 3 S-adenosyl-L-methionine = N(6),N(6),N(6)-trimethyl-L-lysyl-[protein] + 3 S-adenosyl-L-homocysteine + 3 H(+). Methylates ribosomal protein L11. The polypeptide is Ribosomal protein L11 methyltransferase (Nitrosococcus oceani (strain ATCC 19707 / BCRC 17464 / JCM 30415 / NCIMB 11848 / C-107)).